The chain runs to 98 residues: Defensin-A (98 aa).

Positions 1–18 are cleaved as a signal peptide; sequence MKSITVICFLALCTVAIT. Positions 19–58 are excised as a propeptide; sequence SAYPQEPVLADEARPFANSLFDELPEETYQAAVENFRLKR. Disulfide bonds link Cys-61-Cys-88, Cys-74-Cys-94, and Cys-78-Cys-96.

Belongs to the invertebrate defensin family. Type 1 subfamily.

The protein localises to the secreted. Its function is as follows. Antibacterial peptide mostly active against Gram-positive bacteria. Has activity against the bacteria Gram-negative E.cloacae beta12. This chain is Defensin-A (DEFA), found in Aedes aegypti (Yellowfever mosquito).